The chain runs to 177 residues: Large ribosomal subunit protein uL6 (177 aa).

It belongs to the universal ribosomal protein uL6 family. As to quaternary structure, part of the 50S ribosomal subunit.

In terms of biological role, this protein binds to the 23S rRNA, and is important in its secondary structure. It is located near the subunit interface in the base of the L7/L12 stalk, and near the tRNA binding site of the peptidyltransferase center. This Methylobacterium sp. (strain 4-46) protein is Large ribosomal subunit protein uL6.